Consider the following 387-residue polypeptide: 3-ketoacyl-CoA thiolase (387 aa).

The Acyl-thioester intermediate role is filled by Cys91. Residues His343 and Cys373 each act as proton acceptor in the active site.

This sequence belongs to the thiolase-like superfamily. Thiolase family. Heterotetramer of two alpha chains (FadB) and two beta chains (FadA).

The protein localises to the cytoplasm. The enzyme catalyses an acyl-CoA + acetyl-CoA = a 3-oxoacyl-CoA + CoA. It participates in lipid metabolism; fatty acid beta-oxidation. Functionally, catalyzes the final step of fatty acid oxidation in which acetyl-CoA is released and the CoA ester of a fatty acid two carbons shorter is formed. The sequence is that of 3-ketoacyl-CoA thiolase from Yersinia enterocolitica serotype O:8 / biotype 1B (strain NCTC 13174 / 8081).